A 142-amino-acid chain; its full sequence is Putative pre-16S rRNA nuclease (142 aa).

This sequence belongs to the YqgF nuclease family.

Its subcellular location is the cytoplasm. In terms of biological role, could be a nuclease involved in processing of the 5'-end of pre-16S rRNA. This chain is Putative pre-16S rRNA nuclease, found in Nitratidesulfovibrio vulgaris (strain DSM 19637 / Miyazaki F) (Desulfovibrio vulgaris).